Reading from the N-terminus, the 162-residue chain is Deoxyuridine 5'-triphosphate nucleotidohydrolase (162 aa).

Belongs to the dUTPase family. Homotrimer. It depends on Mg(2+) as a cofactor.

It is found in the host cytoplasm. The protein localises to the virion. It carries out the reaction dUTP + H2O = dUMP + diphosphate + H(+). Functionally, the viral dUTPase may play a role in lowering the dUTP concentration in natural infections to minimize misincorporation of deoxyuridine into the viral DNA and ensure the fidelity of genome replication. This is Deoxyuridine 5'-triphosphate nucleotidohydrolase from Ornithodoros (relapsing fever ticks).